Here is a 218-residue protein sequence, read N- to C-terminus: Monomethylamine corrinoid protein 1 (218 aa).

The 91-residue stretch at 1 to 91 folds into the B12-binding N-terminal domain; it reads MANQEIFDKL…ELEKTKVEGE (91 aa). The B12-binding domain maps to 94-218; sequence TGLAITFVAE…AAKVALNIMK (125 aa). Methylcob(III)alamin is bound at residue His-107.

This sequence belongs to the methylamine corrinoid protein family. In terms of assembly, can form a complex with MtmB.

The protein operates within one-carbon metabolism; methanogenesis from methylamine. In terms of biological role, acts as a methyl group carrier between MtmB and MtbA. In Methanosarcina acetivorans (strain ATCC 35395 / DSM 2834 / JCM 12185 / C2A), this protein is Monomethylamine corrinoid protein 1 (mtmC1).